Consider the following 171-residue polypeptide: MDYFTLFGLPARYQIDTQALSLRFQDLQRQYHPDKFANGTQAQQLAAVQQSATINQAWQTLRHPLTRAEYLLSLHGFDLASEQHTVRDTAFLMEQLTLREELDDIEQSKDDARLESFIKRVQKMFDARLQQMVEQLDNAAWDAAADTVRKLRFLDKLRSSAEQLEEKLLDF.

The J domain maps to 2-74; the sequence is DYFTLFGLPA…LTRAEYLLSL (73 aa).

This sequence belongs to the HscB family. Interacts with HscA and stimulates its ATPase activity. Interacts with IscU.

Its function is as follows. Co-chaperone involved in the maturation of iron-sulfur cluster-containing proteins. Seems to help targeting proteins to be folded toward HscA. The chain is Co-chaperone protein HscB from Salmonella typhimurium (strain LT2 / SGSC1412 / ATCC 700720).